We begin with the raw amino-acid sequence, 137 residues long: Ribosome-binding factor A (137 aa).

Belongs to the RbfA family. Monomer. Binds 30S ribosomal subunits, but not 50S ribosomal subunits or 70S ribosomes.

The protein localises to the cytoplasm. Its function is as follows. One of several proteins that assist in the late maturation steps of the functional core of the 30S ribosomal subunit. Associates with free 30S ribosomal subunits (but not with 30S subunits that are part of 70S ribosomes or polysomes). Required for efficient processing of 16S rRNA. May interact with the 5'-terminal helix region of 16S rRNA. This chain is Ribosome-binding factor A, found in Shewanella amazonensis (strain ATCC BAA-1098 / SB2B).